The following is a 521-amino-acid chain: NAD(P)H-quinone oxidoreductase subunit 2 (521 aa).

The next 14 helical transmembrane spans lie at 16-36 (ILPEGIVIVTLLLVLIVDLIG), 40-60 (VALALPYLAIAGLLVSVGLLV), 80-100 (LSIIFRAIIALSTVVTILMSV), 110-130 (LAEFIAILLTATLGGMFLSAA), 133-153 (LVMVFISLEMLSISSYLMTGY), 168-188 (LLIGASSSAIFLYGLSLLYGL), 212-232 (LGLAIALVFVIAGIAFKISAV), 246-266 (PTPVVAFLSVGSKAAGFAVAI), 280-300 (WHVIFTALAVLSMVLGNVVAL), 308-328 (MLAYSSIGQAGFVMIGLVAGS), 336-356 (VFYMLIYLFMNLGAFSCIILF), 380-400 (LGLSICLLSLGGIPPLAGFFG), 402-422 (IYIFWAGWQSGLYGLVLLGLV), and 468-488 (VGIVATLVATSLAGILANPLF).

The protein belongs to the complex I subunit 2 family. In terms of assembly, NDH-1 can be composed of about 15 different subunits; different subcomplexes with different compositions have been identified which probably have different functions.

It localises to the cellular thylakoid membrane. It catalyses the reaction a plastoquinone + NADH + (n+1) H(+)(in) = a plastoquinol + NAD(+) + n H(+)(out). The catalysed reaction is a plastoquinone + NADPH + (n+1) H(+)(in) = a plastoquinol + NADP(+) + n H(+)(out). In terms of biological role, NDH-1 shuttles electrons from an unknown electron donor, via FMN and iron-sulfur (Fe-S) centers, to quinones in the respiratory and/or the photosynthetic chain. The immediate electron acceptor for the enzyme in this species is believed to be plastoquinone. Couples the redox reaction to proton translocation, and thus conserves the redox energy in a proton gradient. Cyanobacterial NDH-1 also plays a role in inorganic carbon-concentration. In Synechocystis sp. (strain ATCC 27184 / PCC 6803 / Kazusa), this protein is NAD(P)H-quinone oxidoreductase subunit 2.